A 285-amino-acid chain; its full sequence is V-type proton ATPase subunit D (285 aa).

Over residues 208–226 (QKTKENAEKADSVTKEEHQ) the composition is skewed to basic and acidic residues. Residues 208–285 (QKTKENAEKA…ENDSDEEVIF (78 aa)) are disordered. At S219 the chain carries Phosphoserine. Residues 227-236 (GGSNTLQQTK) show a composition bias toward polar residues. Residues 248–263 (VGKEVINEVENSKDDT) show a composition bias toward basic and acidic residues. Acidic residues predominate over residues 271–285 (TDDEEENDSDEEVIF).

The protein belongs to the V-ATPase D subunit family. As to quaternary structure, V-ATPase is a heteromultimeric enzyme composed of a peripheral catalytic V1 complex (components A to H) attached to an integral membrane V0 proton pore complex (components: a, c, c', c'', d, e, f and VOA1).

It is found in the vacuole membrane. Its function is as follows. Subunit of the V1 complex of vacuolar(H+)-ATPase (V-ATPase), a multisubunit enzyme composed of a peripheral complex (V1) that hydrolyzes ATP and a membrane integral complex (V0) that translocates protons. V-ATPase is responsible for acidifying and maintaining the pH of intracellular compartments. In Schizosaccharomyces pombe (strain 972 / ATCC 24843) (Fission yeast), this protein is V-type proton ATPase subunit D (vma8).